The following is a 204-amino-acid chain: Large ribosomal subunit protein uL4 (204 aa).

The disordered stretch occupies residues 47-69 (KAQKNRAAVSGGGKKPWRQKGTG).

Belongs to the universal ribosomal protein uL4 family. In terms of assembly, part of the 50S ribosomal subunit.

In terms of biological role, one of the primary rRNA binding proteins, this protein initially binds near the 5'-end of the 23S rRNA. It is important during the early stages of 50S assembly. It makes multiple contacts with different domains of the 23S rRNA in the assembled 50S subunit and ribosome. Its function is as follows. Forms part of the polypeptide exit tunnel. The polypeptide is Large ribosomal subunit protein uL4 (Teredinibacter turnerae (strain ATCC 39867 / T7901)).